We begin with the raw amino-acid sequence, 148 residues long: Large ribosomal subunit protein bL9 (148 aa).

The protein belongs to the bacterial ribosomal protein bL9 family.

In terms of biological role, binds to the 23S rRNA. The protein is Large ribosomal subunit protein bL9 of Bacillus thuringiensis subsp. konkukian (strain 97-27).